The sequence spans 155 residues: Pathogenesis-related protein A (155 aa).

This sequence belongs to the BetVI family.

In Petroselinum crispum (Parsley), this protein is Pathogenesis-related protein A (PCPR1-1).